A 691-amino-acid polypeptide reads, in one-letter code: MKLLLLSALLGCLATAYAAPAEGIVKWCVKSEQELRKCHDLAAKVAEFSCVRKDGSFECIQAIKGGEADAITLDGGDIYTAGLTNYGLQPIIAEDYGEDSDTCYYAVAVAKKGTAFGFKTLRGKKSCHTGLGKSAGWNIPIGTLVTESQIRWAGIEDRPVESAVSDFFNASCAPGATMGSKLCQLCKGDCSRSHKEPYYDYAGAFQCLKDGAGDVAFIKPLAVPAAEKASYELLCKDGTRASIDSYKTCHLARVPAHAVVSRKDPELANRIYNKLVAVKDFNLFSSDGYAAKNLMFKDSAQKLVQLPTTTDSFLYLGAEYMSTIRSLKKSQATGASSRAIKWCAVGHAEKGKCDTWTINSFADGESKISCQDAPTVEECIKKIMRKEADAIAVDGGEVYTAGKCGLVPVMVEQYDADLCSAPGEASSYYAVAVAKKGSGLTWKTLKGKRSCHTGLGRTAGWNIPMGLIHQETNDCDFTKYFSKGCAPGSEVGSPFCAQCKGSGKARGGDEDRCKARSEEQYYGYTGAFRCLVEDAGDVAFIKHTIVPESTDGNGPDWAKDLKSSDFELLCQDGTTQPVTKFSECHLAKVPAHAVITRPETRGDVVSILLELQAKFGSSGSDSSFRMFQSSVEKNLLFKDSTKCLQEIPKGTKYQDFLGKEYMIAMQSLRKCSDSTSDLEKACTFHSCQQKE.

An N-terminal signal peptide occupies residues 1–18; sequence MKLLLLSALLGCLATAYA. 2 Transferrin-like domains span residues 25-329 and 340-670; these read VKWC…SLKK and IKWC…SLRK. A disulfide bond links C28 and C50. Fe(3+) contacts are provided by D74 and Y104. 3 cysteine pairs are disulfide-bonded: C127–C207, C172–C186, and C235–C249. Residues T129, S134, G136, and W137 each coordinate hydrogencarbonate. N-linked (GlcNAc...) asparagine glycosylation is present at N169. Fe(3+) is bound at residue Y201. Residue H257 participates in Fe(3+) binding. Cystine bridges form between C343/C379 and C353/C370. Fe(3+)-binding residues include D394 and Y428. 7 disulfide bridges follow: C404–C682, C419–C643, C451–C530, C475–C671, C485–C499, C496–C513, and C570–C584. Hydrogencarbonate contacts are provided by T453, R457, A459, and G460. Y524 lines the Fe(3+) pocket. H592 provides a ligand contact to Fe(3+).

It belongs to the transferrin family. In terms of assembly, monomer. In terms of tissue distribution, abundant in liver and serum with smaller amounts found in the stomach and kidney.

The protein localises to the secreted. Transferrins are iron binding transport proteins which can bind two Fe(3+) ions in association with the binding of an anion, usually bicarbonate. It is responsible for the transport of iron from sites of absorption and heme degradation to those of storage and utilization. Serum transferrin may also have a further role in stimulating cell proliferation. The chain is Serotransferrin-2 (tf2) from Salmo salar (Atlantic salmon).